The chain runs to 174 residues: Repair DNA polymerase X (174 aa).

The tract at residues Arg42–Asp51 is involved in ssDNA binding. Positions 49 and 51 each coordinate Mg(2+). An intrachain disulfide couples Cys81 to Cys86. Asp100 contacts Mg(2+).

Belongs to the DNA polymerase type-X family. Mg(2+) serves as cofactor.

The protein localises to the virion. It carries out the reaction DNA(n) + a 2'-deoxyribonucleoside 5'-triphosphate = DNA(n+1) + diphosphate. Error-prone polymerase lacking a proofreading 3'-5' exonuclease which catalyzes the gap-filling reaction during the DNA repair process. Specifically binds intermediates in the single-nucleotide base-excision repair process. Also catalyzes DNA polymerization with low nucleotide-insertion fidelity. Probably acts as a strategic DNA mutase, which gives rise to a rapid emergence of variants. Generates mismatched G-G pairs, in that case, the polymerase first binds the deoxynucleotide followed by mismatch formation. Together with the viral DNA ligase, fills the single nucleotide gaps generated by the AP endonuclease. Binds DNA with high affinity via the helix alphaE. The protein is Repair DNA polymerase X of Ornithodoros (relapsing fever ticks).